Here is a 353-residue protein sequence, read N- to C-terminus: Dihydroorotate dehydrogenase (quinone) (353 aa).

Residues 67–71 (AGFDK) and T91 each bind FMN. K71 contacts substrate. Substrate is bound at residue 116–120 (NRMGF). FMN contacts are provided by N144 and N177. N177 serves as a coordination point for substrate. Catalysis depends on S180, which acts as the Nucleophile. Residue N182 coordinates substrate. 2 residues coordinate FMN: K213 and T241. Residue 242–243 (NT) coordinates substrate. Residues G265, G294, and 315–316 (YT) contribute to the FMN site.

It belongs to the dihydroorotate dehydrogenase family. Type 2 subfamily. As to quaternary structure, monomer. The cofactor is FMN.

Its subcellular location is the cell membrane. The catalysed reaction is (S)-dihydroorotate + a quinone = orotate + a quinol. The protein operates within pyrimidine metabolism; UMP biosynthesis via de novo pathway; orotate from (S)-dihydroorotate (quinone route): step 1/1. Functionally, catalyzes the conversion of dihydroorotate to orotate with quinone as electron acceptor. The polypeptide is Dihydroorotate dehydrogenase (quinone) (Mycobacteroides abscessus (strain ATCC 19977 / DSM 44196 / CCUG 20993 / CIP 104536 / JCM 13569 / NCTC 13031 / TMC 1543 / L948) (Mycobacterium abscessus)).